We begin with the raw amino-acid sequence, 213 residues long: Motile sperm domain-containing protein 1 (213 aa).

The MSP domain maps to 16 to 143 (PVFVFPTELI…KEHLTESLFF (128 aa)). The next 2 helical transmembrane spans lie at 159-179 (SLLT…PTLG) and 191-211 (LSVN…MAIF). The Nuclear export signal signature appears at 205–208 (LITM).

The protein resides in the endoplasmic reticulum membrane. The protein localises to the golgi apparatus membrane. Plays a role in differentiation and/or proliferation of mesenchymal stem cells. Proposed to be involved in epithelial-to-mesenchymal transition (EMT). However, another study suggests that it is not required for EMT or stem cell self-renewal and acts during later stages of differentiation. The polypeptide is Motile sperm domain-containing protein 1 (MOSPD1) (Bos taurus (Bovine)).